A 148-amino-acid polypeptide reads, in one-letter code: Small ribosomal subunit protein eS19 (148 aa).

Residues 79 to 90 (HGSTKNRGSRPA) show a composition bias toward basic residues. Disordered stretches follow at residues 79-98 (HGSTKNRGSRPAHHVDASGA) and 116-148 (DEEKGGRRITQSGQRDLDRIAKTTVDEEEEDDE). Residues 130-140 (RDLDRIAKTTV) are compositionally biased toward basic and acidic residues.

It belongs to the eukaryotic ribosomal protein eS19 family.

The chain is Small ribosomal subunit protein eS19 (rps19) from Emericella nidulans (strain FGSC A4 / ATCC 38163 / CBS 112.46 / NRRL 194 / M139) (Aspergillus nidulans).